Here is a 382-residue protein sequence, read N- to C-terminus: Ribonuclease D (382 aa).

Residues 4 to 169 (ITTTAELASV…DVFAALDADL (166 aa)) enclose the 3'-5' exonuclease domain. Residues 208–289 (KPKDLAVMME…QRGLARDPRE (82 aa)) form the HRDC domain.

It belongs to the RNase D family. A divalent metal cation serves as cofactor.

The protein localises to the cytoplasm. It catalyses the reaction Exonucleolytic cleavage that removes extra residues from the 3'-terminus of tRNA to produce 5'-mononucleotides.. Exonuclease involved in the 3' processing of various precursor tRNAs. Initiates hydrolysis at the 3'-terminus of an RNA molecule and releases 5'-mononucleotides. The protein is Ribonuclease D of Nitrobacter hamburgensis (strain DSM 10229 / NCIMB 13809 / X14).